A 116-amino-acid polypeptide reads, in one-letter code: Ribonuclease P protein component (116 aa).

This sequence belongs to the RnpA family. As to quaternary structure, consists of a catalytic RNA component (M1 or rnpB) and a protein subunit.

It carries out the reaction Endonucleolytic cleavage of RNA, removing 5'-extranucleotides from tRNA precursor.. In terms of biological role, RNaseP catalyzes the removal of the 5'-leader sequence from pre-tRNA to produce the mature 5'-terminus. It can also cleave other RNA substrates such as 4.5S RNA. The protein component plays an auxiliary but essential role in vivo by binding to the 5'-leader sequence and broadening the substrate specificity of the ribozyme. This chain is Ribonuclease P protein component, found in Picosynechococcus sp. (strain ATCC 27264 / PCC 7002 / PR-6) (Agmenellum quadruplicatum).